The chain runs to 152 residues: Protein NrdI (152 aa).

Belongs to the NrdI family.

Functionally, probably involved in ribonucleotide reductase function. This is Protein NrdI from Mycobacterium sp. (strain JLS).